Reading from the N-terminus, the 315-residue chain is Ribosomal protein L11 methyltransferase (315 aa).

S-adenosyl-L-methionine-binding residues include Thr163, Gly184, Asp206, and Asn248.

The protein belongs to the methyltransferase superfamily. PrmA family.

Its subcellular location is the cytoplasm. It catalyses the reaction L-lysyl-[protein] + 3 S-adenosyl-L-methionine = N(6),N(6),N(6)-trimethyl-L-lysyl-[protein] + 3 S-adenosyl-L-homocysteine + 3 H(+). Methylates ribosomal protein L11. This Lacticaseibacillus paracasei (strain ATCC 334 / BCRC 17002 / CCUG 31169 / CIP 107868 / KCTC 3260 / NRRL B-441) (Lactobacillus paracasei) protein is Ribosomal protein L11 methyltransferase.